The primary structure comprises 102 residues: NADH-quinone oxidoreductase subunit K (102 aa).

3 consecutive transmembrane segments (helical) span residues 6-26 (FEHALVLASVLFVLGLVALLI), 30-50 (LIVMLMSVEIMLNAAGLAFIA), and 62-82 (VMFLLILTLAAAEVGVGLGLG).

It belongs to the complex I subunit 4L family. NDH-1 is composed of 14 different subunits. Subunits NuoA, H, J, K, L, M, N constitute the membrane sector of the complex.

Its subcellular location is the cell inner membrane. The enzyme catalyses a quinone + NADH + 5 H(+)(in) = a quinol + NAD(+) + 4 H(+)(out). Its function is as follows. NDH-1 shuttles electrons from NADH, via FMN and iron-sulfur (Fe-S) centers, to quinones in the respiratory chain. The immediate electron acceptor for the enzyme in this species is believed to be ubiquinone. Couples the redox reaction to proton translocation (for every two electrons transferred, four hydrogen ions are translocated across the cytoplasmic membrane), and thus conserves the redox energy in a proton gradient. This Methylococcus capsulatus (strain ATCC 33009 / NCIMB 11132 / Bath) protein is NADH-quinone oxidoreductase subunit K.